Reading from the N-terminus, the 367-residue chain is Mitochondrial distribution and morphology protein 34 (367 aa).

In terms of domain architecture, SMP-LTD spans 1–197 (MSFNFTWPEF…LPSIIHRLSQ (197 aa)). Disordered regions lie at residues 267–311 (QGLK…ALSS) and 347–367 (PAHRPRSSRVHARQKRAFHLS). A compositionally biased stretch (polar residues) spans 286–302 (FHTTSRVRVPSSLESNA).

This sequence belongs to the MDM34 family. In terms of assembly, component of the ER-mitochondria encounter structure (ERMES) or MDM complex, composed of MMM1, MDM10, MDM12 and MDM34.

The protein localises to the mitochondrion outer membrane. Its function is as follows. Component of the ERMES/MDM complex, which serves as a molecular tether to connect the endoplasmic reticulum (ER) and mitochondria. Components of this complex are involved in the control of mitochondrial shape and protein biogenesis, and function in nonvesicular lipid trafficking between the ER and mitochondria. MDM34 is required for the interaction of the ER-resident membrane protein MMM1 and the outer mitochondrial membrane-resident beta-barrel protein MDM10. This chain is Mitochondrial distribution and morphology protein 34, found in Malassezia globosa (strain ATCC MYA-4612 / CBS 7966) (Dandruff-associated fungus).